The sequence spans 101 residues: Integration host factor subunit alpha (101 aa).

It belongs to the bacterial histone-like protein family. In terms of assembly, heterodimer of an alpha and a beta chain.

This protein is one of the two subunits of integration host factor, a specific DNA-binding protein that functions in genetic recombination as well as in transcriptional and translational control. This chain is Integration host factor subunit alpha, found in Halorhodospira halophila (strain DSM 244 / SL1) (Ectothiorhodospira halophila (strain DSM 244 / SL1)).